The chain runs to 391 residues: S-adenosylmethionine synthase (391 aa).

His14 is an ATP binding site. Asp16 contacts Mg(2+). Position 42 (Glu42) interacts with K(+). L-methionine contacts are provided by Glu55 and Gln98. Residues 98-108 (QSADIAMGVDE) form a flexible loop region. Residues 172-174 (DGK), 238-239 (RF), Asp247, 253-254 (RK), Ala270, and Lys274 contribute to the ATP site. Asp247 contacts L-methionine. Position 278 (Lys278) interacts with L-methionine.

This sequence belongs to the AdoMet synthase family. Homotetramer; dimer of dimers. The cofactor is Mg(2+). K(+) is required as a cofactor.

The protein localises to the cytoplasm. It carries out the reaction L-methionine + ATP + H2O = S-adenosyl-L-methionine + phosphate + diphosphate. The protein operates within amino-acid biosynthesis; S-adenosyl-L-methionine biosynthesis; S-adenosyl-L-methionine from L-methionine: step 1/1. Functionally, catalyzes the formation of S-adenosylmethionine (AdoMet) from methionine and ATP. The overall synthetic reaction is composed of two sequential steps, AdoMet formation and the subsequent tripolyphosphate hydrolysis which occurs prior to release of AdoMet from the enzyme. This chain is S-adenosylmethionine synthase, found in Clostridium botulinum (strain Alaska E43 / Type E3).